Reading from the N-terminus, the 726-residue chain is Catalase-peroxidase (726 aa).

A disordered region spans residues 1-33 (MSTSDDIHNTTATGKCPFHQGGHDQSAGGGTTT). A cross-link (tryptophyl-tyrosyl-methioninium (Trp-Tyr) (with M-252)) is located at residues 105–226 (WHGAGTYRSI…LGATEMGLIY (122 aa)). H106 serves as the catalytic Proton acceptor. The segment at residues 226–252 (YVNPEGPDHSGEPLSAAAAIRATFGNM) is a cross-link (tryptophyl-tyrosyl-methioninium (Tyr-Met) (with W-105)). Residue H267 coordinates heme b.

It belongs to the peroxidase family. Peroxidase/catalase subfamily. In terms of assembly, homodimer or homotetramer. Requires heme b as cofactor. In terms of processing, formation of the three residue Trp-Tyr-Met cross-link is important for the catalase, but not the peroxidase activity of the enzyme.

The catalysed reaction is H2O2 + AH2 = A + 2 H2O. It carries out the reaction 2 H2O2 = O2 + 2 H2O. Its function is as follows. Bifunctional enzyme with both catalase and broad-spectrum peroxidase activity. This chain is Catalase-peroxidase, found in Escherichia coli (strain UTI89 / UPEC).